The primary structure comprises 538 residues: Putative cysteine ligase BshC (538 aa).

Positions 460–484 form a coiled coil; it reads KINEQIELLERMLKRNVEKKHEVEL.

This sequence belongs to the BshC family.

Functionally, involved in bacillithiol (BSH) biosynthesis. May catalyze the last step of the pathway, the addition of cysteine to glucosamine malate (GlcN-Mal) to generate BSH. This chain is Putative cysteine ligase BshC, found in Bacillus cereus (strain AH820).